A 288-amino-acid chain; its full sequence is Sulfhydrogenase 2 subunit gamma (288 aa).

The FAD-binding FR-type domain maps to 4–103 (YRSYDARIIE…RGPYGNGFPM (100 aa)). Residues cysteine 250, cysteine 255, cysteine 258, and cysteine 270 each coordinate [2Fe-2S] cluster.

As to quaternary structure, dimer of heterotetramer of alpha, beta, gamma and delta subunits. The nickel-containing alpha and delta subunits constitute the hydrogenase activity. The beta and gamma subunits (flavin-containing dimer) constitute the sulfur reductase activity. It depends on FAD as a cofactor. [2Fe-2S] cluster is required as a cofactor.

The protein resides in the cytoplasm. It carries out the reaction n sulfur + H2 = (n-1) sulfur + hydrogen sulfide + H(+). Its function is as follows. Part of a bifunctional enzyme complex that functions as a hydrogen-evolving hydrogenase with sulfur-reducing activity. May play a role in hydrogen cycling during fermentative growth. Activity exhibited with NAD in addition to NADPH. The beta and gamma subunits form the sulfur-reducing component that catalyzes the cytoplasmic production of hydrogen sulfide in the presence of elemental sulfur. The protein is Sulfhydrogenase 2 subunit gamma of Pyrococcus furiosus (strain ATCC 43587 / DSM 3638 / JCM 8422 / Vc1).